Here is a 493-residue protein sequence, read N- to C-terminus: Glutamate--tRNA ligase (493 aa).

A 'HIGH' region motif is present at residues 10-20 (PSPTGDPHVGT). Positions 251–255 (KLSKR) match the 'KMSKS' region motif. Residue Lys-254 coordinates ATP.

Belongs to the class-I aminoacyl-tRNA synthetase family. Glutamate--tRNA ligase type 1 subfamily. In terms of assembly, monomer.

It localises to the cytoplasm. The catalysed reaction is tRNA(Glu) + L-glutamate + ATP = L-glutamyl-tRNA(Glu) + AMP + diphosphate. Its function is as follows. Catalyzes the attachment of glutamate to tRNA(Glu) in a two-step reaction: glutamate is first activated by ATP to form Glu-AMP and then transferred to the acceptor end of tRNA(Glu). The chain is Glutamate--tRNA ligase from Pseudomonas putida (strain W619).